The chain runs to 247 residues: Ribose-5-phosphate isomerase (247 aa).

It belongs to the ribose 5-phosphate isomerase family.

Its subcellular location is the cytoplasm. It carries out the reaction aldehydo-D-ribose 5-phosphate = D-ribulose 5-phosphate. Its pathway is carbohydrate degradation; pentose phosphate pathway; D-ribose 5-phosphate from D-ribulose 5-phosphate (non-oxidative stage): step 1/1. The protein is Ribose-5-phosphate isomerase (RKI1) of Meyerozyma guilliermondii (strain ATCC 6260 / CBS 566 / DSM 6381 / JCM 1539 / NBRC 10279 / NRRL Y-324) (Yeast).